We begin with the raw amino-acid sequence, 212 residues long: Thymidylate kinase (212 aa).

Ala2 is modified (N-acetylalanine). Residues 16–21 (RAGKTT) and Arg97 contribute to the ATP site. An LID region spans residues 133–157 (LQLQLLDAAARGEFGLERYETGTFQ). ATP is bound by residues Lys182 and Arg192.

The protein belongs to the thymidylate kinase family. Homodimer. The cofactor is Mg(2+).

The catalysed reaction is dTMP + ATP = dTDP + ADP. The protein operates within pyrimidine metabolism; dTTP biosynthesis. In terms of biological role, catalyzes the phosphorylation of thymidine monophosphate (dTMP) to thymidine diphosphate (dTDP), the immediate precursor for the DNA building block dTTP, with ATP as the preferred phosphoryl donor in the presence of Mg(2+). This chain is Thymidylate kinase (Dtymk), found in Mus musculus (Mouse).